Consider the following 398-residue polypeptide: 1-deoxy-D-xylulose 5-phosphate reductoisomerase (398 aa).

The NADPH site is built by threonine 10, glycine 11, serine 12, isoleucine 13, glycine 36, lysine 37, asparagine 38, and asparagine 124. Lysine 125 provides a ligand contact to 1-deoxy-D-xylulose 5-phosphate. Glutamate 126 is an NADPH binding site. Position 150 (aspartate 150) interacts with Mn(2+). 1-deoxy-D-xylulose 5-phosphate-binding residues include serine 151, glutamate 152, serine 186, and histidine 209. Glutamate 152 provides a ligand contact to Mn(2+). Glycine 215 contacts NADPH. Positions 222, 227, 228, and 231 each coordinate 1-deoxy-D-xylulose 5-phosphate. Position 231 (glutamate 231) interacts with Mn(2+).

It belongs to the DXR family. In terms of assembly, homodimer. Mg(2+) is required as a cofactor. The cofactor is Mn(2+).

The catalysed reaction is 2-C-methyl-D-erythritol 4-phosphate + NADP(+) = 1-deoxy-D-xylulose 5-phosphate + NADPH + H(+). Its pathway is isoprenoid biosynthesis; isopentenyl diphosphate biosynthesis via DXP pathway; isopentenyl diphosphate from 1-deoxy-D-xylulose 5-phosphate: step 1/6. Catalyzes the NADPH-dependent rearrangement and reduction of 1-deoxy-D-xylulose-5-phosphate (DXP) to 2-C-methyl-D-erythritol 4-phosphate (MEP). This Escherichia coli O157:H7 protein is 1-deoxy-D-xylulose 5-phosphate reductoisomerase.